The sequence spans 986 residues: Leucine-rich repeat receptor-like kinase protein HAR1 (986 aa).

Residues 1–25 (MRIRVSYLLVLCFTLIWFRWTVVYS) form the signal peptide. 21 LRR repeats span residues 71-97 (DQNL…IGLL), 98-121 (EKLE…LASL), 123-145 (SLKV…ITVG), 146-170 (MTEL…IVKL), 171-196 (EKLK…EFQS), 198-218 (EFLG…LAKL), 243-267 (MENL…LGNL), 268-291 (TKLH…LSSM), 293-314 (SLMS…SFSK), 316-339 (KNLT…IGDL), 340-363 (PNLE…LGGN), 365-387 (RFLY…LCKS), 388-411 (GRLK…IGEC), 412-435 (RSLT…VFQL), 437-458 (SVTI…VISG), 459-482 (ESLG…MKNL), 483-506 (RALQ…VFEI), 508-530 (MLTK…ITHR), 531-554 (ASLT…MKNL), 555-578 (MDLS…IRFM), and 579-603 (TSLT…QFLV). Asparagine 80, asparagine 102, asparagine 109, asparagine 128, and asparagine 141 each carry an N-linked (GlcNAc...) asparagine glycan. N-linked (GlcNAc...) asparagine glycosylation is found at asparagine 255, asparagine 266, and asparagine 279. N-linked (GlcNAc...) asparagine glycans are attached at residues asparagine 317 and asparagine 351. N-linked (GlcNAc...) asparagine glycosylation is found at asparagine 513 and asparagine 518. N-linked (GlcNAc...) asparagine glycans are attached at residues asparagine 561 and asparagine 590. A helical transmembrane segment spans residues 645 to 665 (IVIGIALATAVLLVAVTVHVV). The 277-residue stretch at 695–971 (LKEENIIGKG…TMREVVHMLT (277 aa)) folds into the Protein kinase domain. ATP is bound by residues 701–709 (IGKGGAGIV) and lysine 723. Aspartate 820 acts as the Proton acceptor in catalysis.

Belongs to the protein kinase superfamily. Ser/Thr protein kinase family. Expressed in roots, leaves, stems and flowers.

It localises to the cell membrane. The catalysed reaction is L-seryl-[protein] + ATP = O-phospho-L-seryl-[protein] + ADP + H(+). It carries out the reaction L-threonyl-[protein] + ATP = O-phospho-L-threonyl-[protein] + ADP + H(+). Its function is as follows. LRR receptor kinase involved in the regulation of root and shoot growth, and root nodule organogenesis. Involved in long distance nodulation signaling events. Involved in the autoregulation of nodulation (AON), a long distance systemic signaling from root to shoot and back again, which allows legumes to limit the number of root nodules formed based on available nitrogen and previous rhizobial colonization. Acts from shoot to root to control AON. Involved in the regulation of root colonization by arbuscular mycorrhizal (AM) fungi. This is Leucine-rich repeat receptor-like kinase protein HAR1 from Lotus japonicus (Lotus corniculatus var. japonicus).